The chain runs to 394 residues: Short-chain dehydrogenase/reductase family 42E member 1 (394 aa).

Y153 acts as the Proton acceptor in catalysis. K157 serves as a coordination point for NAD(+). The next 2 helical transmembrane spans lie at L283 to G303 and F367 to L387.

This sequence belongs to the 3-beta-HSD family.

Its subcellular location is the membrane. The sequence is that of Short-chain dehydrogenase/reductase family 42E member 1 (Sdr42e1) from Mus musculus (Mouse).